Here is a 365-residue protein sequence, read N- to C-terminus: Sulfate/thiosulfate import ATP-binding protein CysA (365 aa).

An ABC transporter domain is found at 3–237 (IEIANIKKSF…PATRFVLEFM (235 aa)). ATP is bound at residue 35–42 (GPSGSGKT).

The protein belongs to the ABC transporter superfamily. Sulfate/tungstate importer (TC 3.A.1.6) family. In terms of assembly, the complex is composed of two ATP-binding proteins (CysA), two transmembrane proteins (CysT and CysW) and a solute-binding protein (CysP).

It localises to the cell inner membrane. The catalysed reaction is sulfate(out) + ATP + H2O = sulfate(in) + ADP + phosphate + H(+). The enzyme catalyses thiosulfate(out) + ATP + H2O = thiosulfate(in) + ADP + phosphate + H(+). Its function is as follows. Part of the ABC transporter complex CysAWTP involved in sulfate/thiosulfate import. Responsible for energy coupling to the transport system. This Escherichia coli O6:H1 (strain CFT073 / ATCC 700928 / UPEC) protein is Sulfate/thiosulfate import ATP-binding protein CysA.